The primary structure comprises 159 residues: MATLWRLSVLCGARGGGALVLRTSVVRPAHVSAFLQDRHTPGWCGVQHIHLSPSHQASSKAASLHWTGERVVSVLLLGLLPAAYLNPCSAMDYSLAAALTLHGHWGIGQVVTDYVRGDALQKVAKAGLLALSAFTFAGLCYFNYHDVGICKAVAMLWKL.

The N-terminal 36 residues, 1 to 36 (MATLWRLSVLCGARGGGALVLRTSVVRPAHVSAFLQ), are a transit peptide targeting the mitochondrion. Residues 37–63 (DRHTPGWCGVQHIHLSPSHQASSKAAS) are Mitochondrial matrix-facing. Residues 64–85 (LHWTGERVVSVLLLGLLPAAYL) traverse the membrane as a helical segment. Topologically, residues 86–90 (NPCSA) are mitochondrial intermembrane. A helical membrane pass occupies residues 91 to 111 (MDYSLAAALTLHGHWGIGQVV). Residue histidine 102 coordinates heme b. The Mitochondrial matrix segment spans residues 112–120 (TDYVRGDAL). Tyrosine 114 contacts a ubiquinone. Residues 121-142 (QKVAKAGLLALSAFTFAGLCYF) form a helical membrane-spanning segment. The Mitochondrial intermembrane segment spans residues 143-159 (NYHDVGICKAVAMLWKL).

It belongs to the CybS family. Component of complex II composed of four subunits: the flavoprotein (FP) SDHA, iron-sulfur protein (IP) SDHB, and a cytochrome b560 composed of SDHC and SDHD.

The protein localises to the mitochondrion inner membrane. It participates in carbohydrate metabolism; tricarboxylic acid cycle. Functionally, membrane-anchoring subunit of succinate dehydrogenase (SDH) that is involved in complex II of the mitochondrial electron transport chain and is responsible for transferring electrons from succinate to ubiquinone (coenzyme Q). SDH also oxidizes malate to the non-canonical enol form of oxaloacetate, enol-oxaloacetate. Enol-oxaloacetate, which is a potent inhibitor of the succinate dehydrogenase activity, is further isomerized into keto-oxaloacetate. This is Succinate dehydrogenase [ubiquinone] cytochrome b small subunit, mitochondrial (SDHD) from Sus scrofa (Pig).